The following is a 520-amino-acid chain: Putative cytochrome P450 CYP13A3 (520 aa).

Cysteine 464 is a binding site for heme.

It belongs to the cytochrome P450 family. Requires heme as cofactor.

In terms of biological role, cytochromes P450 are a group of heme-thiolate monooxygenases. They oxidize a variety of structurally unrelated compounds, including steroids, fatty acids, and xenobiotics. In Caenorhabditis elegans, this protein is Putative cytochrome P450 CYP13A3 (cyp-13A3).